The primary structure comprises 444 residues: Glutamyl-tRNA reductase (444 aa).

Substrate-binding positions include 49–52 (TCNR), Ser109, 114–116 (ETQ), and Gln120. The Nucleophile role is filled by Cys50. Position 189–194 (189–194 (GAGKMG)) interacts with NADP(+).

The protein belongs to the glutamyl-tRNA reductase family. In terms of assembly, homodimer.

It catalyses the reaction (S)-4-amino-5-oxopentanoate + tRNA(Glu) + NADP(+) = L-glutamyl-tRNA(Glu) + NADPH + H(+). The protein operates within porphyrin-containing compound metabolism; protoporphyrin-IX biosynthesis; 5-aminolevulinate from L-glutamyl-tRNA(Glu): step 1/2. Its function is as follows. Catalyzes the NADPH-dependent reduction of glutamyl-tRNA(Glu) to glutamate 1-semialdehyde (GSA). This chain is Glutamyl-tRNA reductase, found in Bacillus cereus (strain AH187).